Here is an 89-residue protein sequence, read N- to C-terminus: Small ribosomal subunit protein uS15 (89 aa).

The protein belongs to the universal ribosomal protein uS15 family. In terms of assembly, part of the 30S ribosomal subunit. Forms a bridge to the 50S subunit in the 70S ribosome, contacting the 23S rRNA.

One of the primary rRNA binding proteins, it binds directly to 16S rRNA where it helps nucleate assembly of the platform of the 30S subunit by binding and bridging several RNA helices of the 16S rRNA. In terms of biological role, forms an intersubunit bridge (bridge B4) with the 23S rRNA of the 50S subunit in the ribosome. In Janthinobacterium sp. (strain Marseille) (Minibacterium massiliensis), this protein is Small ribosomal subunit protein uS15.